Reading from the N-terminus, the 631-residue chain is Chaperone protein DnaK (631 aa).

T197 carries the phosphothreonine; by autocatalysis modification. The disordered stretch occupies residues 600–631; sequence KKENPQAADAQQGNTANAGKKKDDDVIDAEVE.

This sequence belongs to the heat shock protein 70 family.

Functionally, acts as a chaperone. The chain is Chaperone protein DnaK from Wolinella succinogenes (strain ATCC 29543 / DSM 1740 / CCUG 13145 / JCM 31913 / LMG 7466 / NCTC 11488 / FDC 602W) (Vibrio succinogenes).